The chain runs to 496 residues: MASQRNDRIQASRNGLKGKVLTLDTMNPCVRRVEYAVRGPIVQRALELEQELRQGVKKPFTEVIRANIGDAQAMGQRPITFFRQVLALCVYPNLLSSPDFPEDAKRRAERILQACGGHSLGAYSISSGIQPIREDVAQYIERRDGGIPADPNNIFLSTGASDAIVTMLKLLVAGEGRARTGVLIPIPQYPLYSAALAELDAVQVDYYLDEERAWALDIAELRRALCQARDRCCPRVLCVINPGNPTGQVQTRECIEAVIRFAFEEGLFLMADEVYQDNVYAEGSQFHSFKKVLTEMGPPYATQQELASFHSVSKGYMGECGFRGGYVEVVNMDAEVQKQMAKLMSVRLCPPVPGQALMGMVVSPPTPSEPSFKQFQAERQEVLAELAAKAKLTEQVFNEAPGIRCNPVQGAMYSFPQIQLPLKAVQRAQDLGLAPDMFFCLCLLEETGICVVPGSGFGQQEGTYHFRMTILPPMEKLRVLLEKLRHFHAKFTHEYS.

Ala2 carries the N-acetylalanine modification. A Phosphothreonine modification is found at Thr22. Lys314 is modified (N6-(pyridoxal phosphate)lysine).

This sequence belongs to the class-I pyridoxal-phosphate-dependent aminotransferase family. Alanine aminotransferase subfamily. Homodimer. It depends on pyridoxal 5'-phosphate as a cofactor. In terms of tissue distribution, mainly expressed in liver, intestine, colon and white adipose tissue.

It localises to the cytoplasm. The catalysed reaction is L-alanine + 2-oxoglutarate = pyruvate + L-glutamate. Its pathway is amino-acid degradation; L-alanine degradation via transaminase pathway; pyruvate from L-alanine: step 1/1. Functionally, catalyzes the reversible transamination between alanine and 2-oxoglutarate to form pyruvate and glutamate. Participates in cellular nitrogen metabolism and also in liver gluconeogenesis starting with precursors transported from skeletal muscles. The chain is Alanine aminotransferase 1 (Gpt) from Mus musculus (Mouse).